A 180-amino-acid chain; its full sequence is Peroxisome assembly protein 22 (180 aa).

The chain crosses the membrane as a helical span at residues 15 to 32 (LGIVGTAIAVLVTSYYIY).

The protein belongs to the peroxin-22 family.

The protein resides in the peroxisome membrane. Involved in peroxisome biogenesis. The chain is Peroxisome assembly protein 22 (PEX22) from Saccharomyces cerevisiae (strain ATCC 204508 / S288c) (Baker's yeast).